The chain runs to 562 residues: Glucose-6-phosphate isomerase (562 aa).

Glu370 functions as the Proton donor in the catalytic mechanism. Residues His401 and Lys526 contribute to the active site.

This sequence belongs to the GPI family.

It localises to the cytoplasm. It carries out the reaction alpha-D-glucose 6-phosphate = beta-D-fructose 6-phosphate. Its pathway is carbohydrate biosynthesis; gluconeogenesis. It functions in the pathway carbohydrate degradation; glycolysis; D-glyceraldehyde 3-phosphate and glycerone phosphate from D-glucose: step 2/4. In terms of biological role, catalyzes the reversible isomerization of glucose-6-phosphate to fructose-6-phosphate. The sequence is that of Glucose-6-phosphate isomerase from Deinococcus geothermalis (strain DSM 11300 / CIP 105573 / AG-3a).